Reading from the N-terminus, the 191-residue chain is General negative regulator of transcription subunit 2 (191 aa).

The protein belongs to the CNOT2/3/5 family. As to quaternary structure, forms a NOT protein complex that comprises NOT1, NOT2, NOT3, NOT4 and NOT5. Subunit of the 1.0 MDa CCR4-NOT core complex that contains CCR4, CAF1, NOT1, NOT2, NOT3, NOT4, NOT5, CAF40 and CAF130. In the complex interacts with NOT1 and NOT5. The core complex probably is part of a less characterized 1.9 MDa CCR4-NOT complex.

The protein resides in the cytoplasm. It localises to the nucleus. In terms of biological role, acts as a component of the CCR4-NOT core complex, which in the nucleus seems to be a general transcription factor, and in the cytoplasm the major mRNA deadenylase involved in mRNA turnover. NOT2 is required for the integrity of the complex. The NOT protein subcomplex negatively regulates the basal and activated transcription of many genes. Preferentially affects TC-type TATA element-dependent transcription. Could directly or indirectly inhibit component(s) of the general transcription machinery. The chain is General negative regulator of transcription subunit 2 (CDC36) from Saccharomyces cerevisiae (strain ATCC 204508 / S288c) (Baker's yeast).